Reading from the N-terminus, the 152-residue chain is Catabolic 3-dehydroquinase 1 (152 aa).

The active-site Proton acceptor is the Tyr-24. Asn-75, His-81, and Asp-88 together coordinate substrate. The active-site Proton donor is His-101. Substrate-binding positions include 102–103 (VS) and Arg-112.

Belongs to the type-II 3-dehydroquinase family. Homododecamer. Adopts a ring-like structure, composed of an arrangement of two hexameric rings stacked on top of one another.

It catalyses the reaction 3-dehydroquinate = 3-dehydroshikimate + H2O. It functions in the pathway aromatic compound metabolism; 3,4-dihydroxybenzoate biosynthesis; 3,4-dihydroxybenzoate from 3-dehydroquinate: step 1/2. Functionally, is involved in the catabolism of quinate. Allows the utilization of quinate as carbon source via the beta-ketoadipate pathway. The polypeptide is Catabolic 3-dehydroquinase 1 (Aspergillus terreus (strain NIH 2624 / FGSC A1156)).